Consider the following 305-residue polypeptide: Glycine--tRNA ligase alpha subunit (305 aa).

Belongs to the class-II aminoacyl-tRNA synthetase family. In terms of assembly, tetramer of two alpha and two beta subunits.

The protein resides in the cytoplasm. The catalysed reaction is tRNA(Gly) + glycine + ATP = glycyl-tRNA(Gly) + AMP + diphosphate. The sequence is that of Glycine--tRNA ligase alpha subunit from Streptococcus gordonii (strain Challis / ATCC 35105 / BCRC 15272 / CH1 / DL1 / V288).